The primary structure comprises 84 residues: MNYLRRKMKMSETTLVLTIISTTTTTLFAIIQLYLKIKQALKDAVKEIVNSELSNLKTEIEELKIKQDELSRQVEEIKRKLDQK.

The chain crosses the membrane as a helical span at residues 13 to 35 (TTLVLTIISTTTTTLFAIIQLYL). A coiled-coil region spans residues 41–84 (LKDAVKEIVNSELSNLKTEIEELKIKQDELSRQVEEIKRKLDQK).

The protein resides in the host membrane. This is an uncharacterized protein from Sulfolobus islandicus rod-shaped virus 1 (SIRV-1).